The sequence spans 389 residues: Acetylornithine deacetylase (389 aa).

A Zn(2+)-binding site is contributed by histidine 85. Aspartate 87 is a catalytic residue. Aspartate 117 provides a ligand contact to Zn(2+). The active site involves glutamate 149. Residues glutamate 150, glutamate 174, and histidine 360 each contribute to the Zn(2+) site.

This sequence belongs to the peptidase M20A family. ArgE subfamily. As to quaternary structure, homodimer. The cofactor is Zn(2+). Co(2+) serves as cofactor. Glutathione is required as a cofactor.

Its subcellular location is the cytoplasm. The enzyme catalyses N(2)-acetyl-L-ornithine + H2O = L-ornithine + acetate. It functions in the pathway amino-acid biosynthesis; L-arginine biosynthesis; L-ornithine from N(2)-acetyl-L-ornithine (linear): step 1/1. In terms of biological role, catalyzes the hydrolysis of the amide bond of N(2)-acetylated L-amino acids. Cleaves the acetyl group from N-acetyl-L-ornithine to form L-ornithine, an intermediate in L-arginine biosynthesis pathway, and a branchpoint in the synthesis of polyamines. In Yersinia pseudotuberculosis serotype O:1b (strain IP 31758), this protein is Acetylornithine deacetylase.